The following is a 142-amino-acid chain: Lutropin subunit beta (142 aa).

The N-terminal stretch at 1–21 is a signal peptide; sequence MEMLQGLLLLWLLLNVGGVWT. Cystine bridges form between cysteine 30-cysteine 78, cysteine 44-cysteine 93, cysteine 47-cysteine 131, cysteine 55-cysteine 109, cysteine 59-cysteine 111, and cysteine 114-cysteine 121. Residue asparagine 34 is glycosylated (N-linked (GlcNAc...) asparagine).

This sequence belongs to the glycoprotein hormones subunit beta family. As to quaternary structure, heterodimer of a common alpha chain and a unique beta chain which confers biological specificity to thyrotropin, lutropin, follitropin and gonadotropin.

It is found in the secreted. In terms of biological role, promotes spermatogenesis and ovulation by stimulating the testes and ovaries to synthesize steroids. This chain is Lutropin subunit beta (LHB), found in Panthera tigris altaica (Siberian tiger).